Reading from the N-terminus, the 229-residue chain is Uracil-DNA glycosylase (229 aa).

The Proton acceptor role is filled by Asp-64.

It belongs to the uracil-DNA glycosylase (UDG) superfamily. UNG family.

Its subcellular location is the cytoplasm. The catalysed reaction is Hydrolyzes single-stranded DNA or mismatched double-stranded DNA and polynucleotides, releasing free uracil.. Its function is as follows. Excises uracil residues from the DNA which can arise as a result of misincorporation of dUMP residues by DNA polymerase or due to deamination of cytosine. This is Uracil-DNA glycosylase from Salmonella agona (strain SL483).